Consider the following 582-residue polypeptide: Vesicular glutamate transporter 2 (582 aa).

Residues 1–71 are Cytoplasmic-facing; it reads MESVKQRILA…CTCFGLPRRY (71 aa). Residues 72–92 traverse the membrane as a helical segment; it reads IIAIMSGLGFCISFGIRCNLG. The Vesicular segment spans residues 93-125; sequence VAIVDMVNNSTIHRGGKVIKEKAKFNWDPETVG. 2 N-linked (GlcNAc...) asparagine glycosylation sites follow: asparagine 100 and asparagine 101. Residues 126–146 traverse the membrane as a helical segment; sequence MIHGSFFWGYIITQIPGGYIA. At 147-148 the chain is on the cytoplasmic side; the sequence is SR. The chain crosses the membrane as a helical span at residues 149–169; the sequence is LAANRVFGAAILLTSTLNMLI. Over 170 to 177 the chain is Vesicular; it reads PSAARVHY. The chain crosses the membrane as a helical span at residues 178–198; the sequence is GCVIFVRILQGLVEGVTYPAC. Over 199-216 the chain is Cytoplasmic; sequence HGIWSKWAPPLERSRLAT. A helical transmembrane segment spans residues 217–237; it reads TSFCGSYAGAVIAMPLAGILV. Residues 238-244 are Vesicular-facing; sequence QYTGWSS. A helical membrane pass occupies residues 245–265; the sequence is VFYVYGSFGMVWYMFWLLVSY. Topologically, residues 266–310 are cytoplasmic; that stretch reads ESPAKHPTITDEERRYIEESIGESANLLGAMEKFKTPWRKFFTSM. The chain crosses the membrane as a helical span at residues 311 to 331; the sequence is PVYAIIVANFCRSWTFYLLLI. Residues 332–349 lie on the Vesicular side of the membrane; sequence SQPAYFEEVFGFEISKVG. Residues 350–370 form a helical membrane-spanning segment; it reads MLSAVPHLVMTIIVPIGGQIA. Over 371-386 the chain is Cytoplasmic; it reads DFLRSKQILSTTTVRK. Residues 387-407 form a helical membrane-spanning segment; it reads IMNCGGFGMEATLLLVVGYSH. Over 408–409 the chain is Vesicular; that stretch reads TR. A helical transmembrane segment spans residues 410 to 430; that stretch reads GVAISFLVLAVGFSGFAISGF. At 431-443 the chain is on the cytoplasmic side; it reads NVNHLDIAPRYAS. A helical transmembrane segment spans residues 444–464; it reads ILMGISDGVGTLSGMVCPIIV. The Vesicular segment spans residues 465–477; it reads GAMTKNKSREEWQ. Asparagine 470 is a glycosylation site (N-linked (GlcNAc...) asparagine). Residues 478-498 traverse the membrane as a helical segment; it reads YVFLIAALVHYGGVIFYALFA. Residues 499–582 lie on the Cytoplasmic side of the membrane; that stretch reads SGEKQPWADP…YTYKDRDDYS (84 aa).

The protein belongs to the major facilitator superfamily. Sodium/anion cotransporter family. VGLUT subfamily. As to expression, expressed in brain. Expressed in hippocampal neurons (at protein level).

Its subcellular location is the cytoplasmic vesicle. The protein localises to the secretory vesicle. It localises to the synaptic vesicle membrane. The protein resides in the synapse. It is found in the synaptosome. Its subcellular location is the cell membrane. It carries out the reaction L-glutamate(out) = L-glutamate(in). It catalyses the reaction K(+)(in) + H(+)(out) = K(+)(out) + H(+)(in). The enzyme catalyses 3 Na(+)(out) + phosphate(out) = 3 Na(+)(in) + phosphate(in). The catalysed reaction is phosphate(in) = phosphate(out). It carries out the reaction chloride(in) = chloride(out). Chloride channel activity is allosterically activated by lumenal H(+) and Cl(-) leading to synaptic vesicles acidification. The L-glutamate transport activity is allosterically activated by lumenal H(+) and Cl(-). The allosteric requirement for H(+) efficiently prevents non-vesicular efflux across the plasma membrane. The L-glutamate uniporter activity exhibits a biphasic dependence on chloride concentration. In terms of biological role, multifunctional transporter that transports L-glutamate as well as multiple ions such as chloride, proton, potassium, sodium and phosphate. At the synaptic vesicle membrane, mainly functions as a uniporter which transports preferentially L-glutamate but also, phosphate from the cytoplasm into synaptic vesicles at presynaptic nerve terminals of excitatory neural cells. The L-glutamate or phosphate uniporter activity is electrogenic and is driven by the proton electrochemical gradient, mainly by the electrical gradient established by the vacuolar H(+)-ATPase across the synaptic vesicle membrane. In addition, functions as a chloride channel that allows a chloride permeation through the synaptic vesicle membrane therefore affects the proton electrochemical gradient and promotes synaptic vesicles acidification. Moreover, functions as a vesicular K(+)/H(+) antiport allowing to maintain the electrical gradient and to decrease chemical gradient and therefore sustain vesicular glutamate uptake. The vesicular H(+)/H(+) antiport activity is electroneutral. At the plasma membrane, following exocytosis, functions as a symporter of Na(+) and phosphate from the extracellular space to the cytoplasm allowing synaptic phosphate homeostasis regulation. The symporter activity is driven by an inside negative membrane potential and is electrogenic. Also involved in the regulation of retinal hyaloid vessel regression during postnatal development. May also play a role in the endocrine glutamatergic system of other tissues such as pineal gland and pancreas. This Mus musculus (Mouse) protein is Vesicular glutamate transporter 2.